Consider the following 328-residue polypeptide: Tetraacyldisaccharide 4'-kinase (328 aa).

55-62 serves as a coordination point for ATP; the sequence is TAGGNGKT.

This sequence belongs to the LpxK family.

The catalysed reaction is a lipid A disaccharide + ATP = a lipid IVA + ADP + H(+). It participates in glycolipid biosynthesis; lipid IV(A) biosynthesis; lipid IV(A) from (3R)-3-hydroxytetradecanoyl-[acyl-carrier-protein] and UDP-N-acetyl-alpha-D-glucosamine: step 6/6. Its function is as follows. Transfers the gamma-phosphate of ATP to the 4'-position of a tetraacyldisaccharide 1-phosphate intermediate (termed DS-1-P) to form tetraacyldisaccharide 1,4'-bis-phosphate (lipid IVA). This chain is Tetraacyldisaccharide 4'-kinase, found in Shigella boydii serotype 4 (strain Sb227).